A 366-amino-acid polypeptide reads, in one-letter code: Mitogen-activated protein kinase CPK1 (366 aa).

The Protein kinase domain maps to 17–302 (KLEEIVGEGA…SPSKRITVEE (286 aa)). ATP contacts are provided by residues 22 to 30 (VGEGAYGLV) and lysine 45. Aspartate 140 serves as the catalytic Proton acceptor. Threonine 181 carries the post-translational modification Phosphothreonine. The TXY signature appears at 181–183 (TEY). Position 183 is a phosphotyrosine (tyrosine 183).

Belongs to the protein kinase superfamily. CMGC Ser/Thr protein kinase family. MAP kinase subfamily. The cofactor is Mg(2+). In terms of processing, dually phosphorylated on Thr-181 and Tyr-183, which activates the enzyme.

The catalysed reaction is L-seryl-[protein] + ATP = O-phospho-L-seryl-[protein] + ADP + H(+). It catalyses the reaction L-threonyl-[protein] + ATP = O-phospho-L-threonyl-[protein] + ADP + H(+). Its activity is regulated as follows. Activated by tyrosine and threonine phosphorylation. Its function is as follows. Responds to activation by environmental stress by phosphorylating downstream targets. This chain is Mitogen-activated protein kinase CPK1 (CPK1), found in Cryptococcus neoformans var. neoformans serotype D (strain B-3501A) (Filobasidiella neoformans).